Reading from the N-terminus, the 221-residue chain is Ribonuclease T (221 aa).

One can recognise an Exonuclease domain in the interval 20-196; that stretch reads VVVDLETGGF…YDTERTAELF (177 aa). Asp23, Glu25, His183, and Asp188 together coordinate Mg(2+). His183 serves as the catalytic Proton donor/acceptor.

This sequence belongs to the RNase T family. As to quaternary structure, homodimer. Mg(2+) serves as cofactor.

Functionally, trims short 3' overhangs of a variety of RNA species, leaving a one or two nucleotide 3' overhang. Responsible for the end-turnover of tRNA: specifically removes the terminal AMP residue from uncharged tRNA (tRNA-C-C-A). Also appears to be involved in tRNA biosynthesis. This chain is Ribonuclease T, found in Chromohalobacter salexigens (strain ATCC BAA-138 / DSM 3043 / CIP 106854 / NCIMB 13768 / 1H11).